The primary structure comprises 311 residues: Ketoisovalerate oxidoreductase subunit VorB (311 aa).

As to quaternary structure, heterotetramer of one alpha, one beta, one delta and one gamma chain.

The enzyme catalyses 3-methyl-2-oxobutanoate + 2 oxidized [2Fe-2S]-[ferredoxin] + CoA = 2-methylpropanoyl-CoA + 2 reduced [2Fe-2S]-[ferredoxin] + CO2 + H(+). The chain is Ketoisovalerate oxidoreductase subunit VorB (vorB) from Pyrococcus horikoshii (strain ATCC 700860 / DSM 12428 / JCM 9974 / NBRC 100139 / OT-3).